The chain runs to 146 residues: Peptidyl-lysine N-acetyltransferase YiaC (146 aa).

The region spanning 1-143 (MIREAQRSEL…PTWIMSWPVV (143 aa)) is the N-acetyltransferase domain.

It belongs to the acetyltransferase family.

It carries out the reaction L-lysyl-[protein] + acetyl-CoA = N(6)-acetyl-L-lysyl-[protein] + CoA + H(+). Functionally, N-epsilon-lysine acetyltransferase that catalyzes acetylation of a large number of proteins. Overexpression inhibits motility. The polypeptide is Peptidyl-lysine N-acetyltransferase YiaC (yiaC) (Escherichia coli (strain K12)).